The sequence spans 319 residues: 33 kDa chaperonin (319 aa).

Cystine bridges form between Cys-239–Cys-241 and Cys-272–Cys-275. Positions 300 to 319 (EVSEEMKKAEEKEKEEKNKK) are disordered.

Belongs to the HSP33 family. Under oxidizing conditions two disulfide bonds are formed involving the reactive cysteines. Under reducing conditions zinc is bound to the reactive cysteines and the protein is inactive.

It is found in the cytoplasm. Its function is as follows. Redox regulated molecular chaperone. Protects both thermally unfolding and oxidatively damaged proteins from irreversible aggregation. Plays an important role in the bacterial defense system toward oxidative stress. In Clostridium perfringens (strain ATCC 13124 / DSM 756 / JCM 1290 / NCIMB 6125 / NCTC 8237 / Type A), this protein is 33 kDa chaperonin.